The following is a 54-amino-acid chain: Ovomucoid (54 aa).

In terms of domain architecture, Kazal-like spans 4–54 (VDCSEYPKPACTLEHRPLCGSDNKTYGNKCNFCNAVVESNGTLTLSHFGKC). 3 cysteine pairs are disulfide-bonded: cysteine 6-cysteine 36, cysteine 14-cysteine 33, and cysteine 22-cysteine 54. Asparagine 43 carries N-linked (GlcNAc...) asparagine glycosylation.

It is found in the secreted. In Pavo muticus (Green peafowl), this protein is Ovomucoid.